A 447-amino-acid chain; its full sequence is Phosphoglucosamine mutase (447 aa).

Catalysis depends on serine 102, which acts as the Phosphoserine intermediate. 4 residues coordinate Mg(2+): serine 102, aspartate 241, aspartate 243, and aspartate 245. Phosphoserine is present on serine 102.

Belongs to the phosphohexose mutase family. It depends on Mg(2+) as a cofactor. Activated by phosphorylation.

It carries out the reaction alpha-D-glucosamine 1-phosphate = D-glucosamine 6-phosphate. Its function is as follows. Catalyzes the conversion of glucosamine-6-phosphate to glucosamine-1-phosphate. This is Phosphoglucosamine mutase from Pseudomonas syringae pv. syringae (strain B728a).